The chain runs to 282 residues: MVGKISSDLPPGFRFHPTDEELIMYYLRYQATSRPCPVSIIPEIDVYKFDPWVLPEKAEFGDNEWYFFTPRDRKYPNGVRPNRAAVSGYWKATGTDKAIYSANKYVGIKKALVFYKGKPPKGVKTDWIMHEYRLSDSKSQTSKQSGSMRLDDWVLCRIYKKKNLGRTIEMMKVEEEELEAQNVSTTNNEIEVVGGPQTMKLPRICSLSHLLELDYFGSIPQLLSDNLLYDDQGYTMNNVNNTSNVDQVSSQQQNTNNITSNNCNIFFNYQQPLFVNPTFQSQ.

The NAC domain maps to 9–161; that stretch reads LPPGFRFHPT…DWVLCRIYKK (153 aa). The DNA-binding element occupies 106 to 167; sequence VGIKKALVFY…IYKKKNLGRT (62 aa). Residues 161 to 188 are a coiled coil; sequence KKNLGRTIEMMKVEEEELEAQNVSTTNN.

As to expression, expressed in roots, stem, flowers, and leaves.

It is found in the nucleus. Its function is as follows. Transcription factor that binds DNA motifs 5'-CGT[AG](5N)NACG[ACT][AC][AT][ACG][ACT]-3' and 5'-CACG[ACT][AC][AT][AGT][CT]-3' in target genes promoters. Promotes leaf senescence and reduces fruit yield and sugar content, probably by establishing abscisic acid (ABA) homeostasis. This is NAC domain-containing protein 1 from Solanum lycopersicum (Tomato).